The chain runs to 391 residues: MAKSLPLNSRSKTTALKQPRELFSYARDIDGKYVYDDPENSLSYYYLPDSTIDTGIDLQGGYSKFKKIPDEQNLADFNSLLKAIIKYETSEGKKISSDIITFREIMTKILSLPYNLTDPIDLYVVPFDGQLFIKSDDELDMKRRKEQEVRMKQTNTVERYDYMKRCEYVGYKFETIATIPKPWSQVSRSQIENRNKKVVNNYEQYLSVIRTGIGNVKLVLAGEIDCCWDYLPDEQNKKLNHYVELKTSRIIENNSQVVSFEQKLFKAWCQCFLMGVTKIIYGFRDNNLILKNVELFNTEEIPILIKNNPLTNAATEKKINCTNALKWYGAVVDWLNTTVDKKDETKSYRLKYDPVRKSFTLSETESETNEKLRNGELLTPEFTEWRQSLKK.

Glutamate 174 contacts a divalent metal cation. Glutamate 223 is a binding site for substrate. 3 residues coordinate a divalent metal cation: aspartate 225, glutamate 244, and leucine 245. The substrate site is built by lysine 246 and glutamine 270.

The protein belongs to the DXO/Dom3Z family. Interacts with RAT1; the interaction is direct, stabilizes RAT1 protein structure and stimulates its exoribonuclease activity. The interaction also stimulates RAI1 pyrophosphohydrolase activity, probably by recruiting it to mRNA substrates. It depends on a divalent metal cation as a cofactor.

It localises to the nucleus. The catalysed reaction is a 5'-end NAD(+)-phospho-ribonucleoside in mRNA + H2O = a 5'-end phospho-ribonucleoside in mRNA + NAD(+) + H(+). It catalyses the reaction a 5'-end (N(7)-methyl 5'-triphosphoguanosine)-ribonucleoside-ribonucleotide in mRNA + H2O = a (N(7)-methyl 5'-triphosphoguanosine)-nucleoside + a 5'-end phospho-ribonucleoside in mRNA + H(+). The enzyme catalyses a 5'-end triphospho-ribonucleoside in mRNA + H2O = a 5'-end phospho-ribonucleoside in mRNA + diphosphate + H(+). Its function is as follows. Decapping enzyme for NAD-capped RNAs: specifically hydrolyzes the nicotinamide adenine dinucleotide (NAD) cap from a subset of RNAs by removing the entire NAD moiety from the 5'-end of an NAD-capped RNA. The NAD-cap is present at the 5'-end of some RNAs and snoRNAs. In contrast to the canonical 5'-end N7 methylguanosine (m7G) cap, the NAD cap promotes mRNA decay. Also acts as a non-canonical decapping enzyme that removes the entire cap structure of m7G capped or incompletely capped RNAs. Has decapping activity toward incomplete 5'-end m7G cap mRNAs such as unmethylated 5'-end-capped RNA (cap0), while it has no activity toward 2'-O-ribose methylated m7G cap (cap1). Also possesses RNA 5'-pyrophosphohydrolase activity by hydrolyzing the 5'-end triphosphate to release pyrophosphates. Stimulates exoribonuclease activity of Rat1, allowing it to degrade RNAs with stable secondary structure more effectively. The chain is Decapping nuclease RAI1 from Candida albicans (strain SC5314 / ATCC MYA-2876) (Yeast).